The sequence spans 248 residues: Carbohydrate deacetylase 2 (248 aa).

The Mg(2+) site is built by H59 and H123.

It belongs to the YdjC deacetylase family. In terms of assembly, homodimer. It depends on Mg(2+) as a cofactor.

Its function is as follows. Probably catalyzes the deacetylation of acetylated carbohydrates an important step in the degradation of oligosaccharides. This chain is Carbohydrate deacetylase 2, found in Listeria innocua serovar 6a (strain ATCC BAA-680 / CLIP 11262).